The primary structure comprises 905 residues: DNA gyrase subunit A (905 aa).

Residues 35-524 (IPDVRDGLKP…GEFDQDIEDL (490 aa)) enclose the Topo IIA-type catalytic domain. The active-site O-(5'-phospho-DNA)-tyrosine intermediate is the Tyr123. The short motif at 551-557 (QKRGGKG) is the GyrA-box element.

Belongs to the type II topoisomerase GyrA/ParC subunit family. Heterotetramer, composed of two GyrA and two GyrB chains. In the heterotetramer, GyrA contains the active site tyrosine that forms a transient covalent intermediate with DNA, while GyrB binds cofactors and catalyzes ATP hydrolysis.

It is found in the cytoplasm. The enzyme catalyses ATP-dependent breakage, passage and rejoining of double-stranded DNA.. Its function is as follows. A type II topoisomerase that negatively supercoils closed circular double-stranded (ds) DNA in an ATP-dependent manner to modulate DNA topology and maintain chromosomes in an underwound state. Negative supercoiling favors strand separation, and DNA replication, transcription, recombination and repair, all of which involve strand separation. Also able to catalyze the interconversion of other topological isomers of dsDNA rings, including catenanes and knotted rings. Type II topoisomerases break and join 2 DNA strands simultaneously in an ATP-dependent manner. This Rickettsia prowazekii (strain Madrid E) protein is DNA gyrase subunit A.